A 238-amino-acid polypeptide reads, in one-letter code: Ribonuclease PH (238 aa).

Residues Arg86 and 124 to 126 (GTR) each bind phosphate.

It belongs to the RNase PH family. Homohexameric ring arranged as a trimer of dimers.

The enzyme catalyses tRNA(n+1) + phosphate = tRNA(n) + a ribonucleoside 5'-diphosphate. Functionally, phosphorolytic 3'-5' exoribonuclease that plays an important role in tRNA 3'-end maturation. Removes nucleotide residues following the 3'-CCA terminus of tRNAs; can also add nucleotides to the ends of RNA molecules by using nucleoside diphosphates as substrates, but this may not be physiologically important. Probably plays a role in initiation of 16S rRNA degradation (leading to ribosome degradation) during starvation. This Shigella boydii serotype 18 (strain CDC 3083-94 / BS512) protein is Ribonuclease PH.